A 93-amino-acid polypeptide reads, in one-letter code: Phosphoribosyl-ATP pyrophosphatase (93 aa).

Belongs to the PRA-PH family.

It localises to the cytoplasm. It catalyses the reaction 1-(5-phospho-beta-D-ribosyl)-ATP + H2O = 1-(5-phospho-beta-D-ribosyl)-5'-AMP + diphosphate + H(+). It participates in amino-acid biosynthesis; L-histidine biosynthesis; L-histidine from 5-phospho-alpha-D-ribose 1-diphosphate: step 2/9. This chain is Phosphoribosyl-ATP pyrophosphatase, found in Mycolicibacterium gilvum (strain PYR-GCK) (Mycobacterium gilvum (strain PYR-GCK)).